Here is a 321-residue protein sequence, read N- to C-terminus: Probable DNA polymerase III subunit delta (321 aa).

The protein belongs to the DNA polymerase HolA subunit family. Component of the DNA clamp loading complex consisting of tau(3):delta(1):delta'(1). The DNA polymerase III holoenzyme complex contains at least 10 different subunits organized into 3 functionally essential subassemblies: the Pol III core, the beta sliding clamp processivity factor and the clamp-loading complex. The Pol III core (subunits alpha, epsilon and theta) contains the polymerase and the 3'-5' exonuclease proofreading activities. The polymerase is tethered to the template via the dimeric beta sliding clamp processivity factor. The DNA clamp-loading complex assembles the beta sliding clamp onto the primed template and plays a central role in the organization and communication at the replication fork.

The catalysed reaction is DNA(n) + a 2'-deoxyribonucleoside 5'-triphosphate = DNA(n+1) + diphosphate. Functionally, part of the beta sliding clamp loading complex, which hydrolyzes ATP to load the beta clamp onto primed DNA to form the DNA replication pre-initiation complex. DNA polymerase III is a complex, multichain enzyme responsible for most of the replicative synthesis in bacteria. This DNA polymerase also exhibits 3'-5' exonuclease activity. The delta subunit is the wrench that will open the beta subunit dimer. The DNA clamp loading complex (tau(3),delta,delta') is thought to load beta dimers onto DNA by binding ATP which alters the complex's conformation so it can bind beta sliding clamp dimers and open them at one interface. Primed DNA is recognized, ATP is hydrolyzed releasing the clamp loading complex and closing the beta sliding clamp ring around the primed DNA. This chain is Probable DNA polymerase III subunit delta, found in Rickettsia prowazekii (strain Madrid E).